Consider the following 107-residue polypeptide: Integration host factor subunit beta (107 aa).

The interval 78 to 107 (PHFKPGKELRERVDGRAGEPLKADEPDDER) is disordered. The span at 82–101 (PGKELRERVDGRAGEPLKAD) shows a compositional bias: basic and acidic residues.

The protein belongs to the bacterial histone-like protein family. As to quaternary structure, heterodimer of an alpha and a beta chain.

Functionally, this protein is one of the two subunits of integration host factor, a specific DNA-binding protein that functions in genetic recombination as well as in transcriptional and translational control. The sequence is that of Integration host factor subunit beta from Burkholderia multivorans (strain ATCC 17616 / 249).